The primary structure comprises 286 residues: Energy-coupling factor transporter ATP-binding protein EcfA2 (286 aa).

The ABC transporter domain occupies 3-246 (IRFDNVSYTY…KKKLADWHIG (244 aa)). Residue 40 to 47 (GQTGSGKS) coordinates ATP.

The protein belongs to the ABC transporter superfamily. Energy-coupling factor EcfA family. Forms a stable energy-coupling factor (ECF) transporter complex composed of 2 membrane-embedded substrate-binding proteins (S component), 2 ATP-binding proteins (A component) and 2 transmembrane proteins (T component).

Its subcellular location is the cell membrane. Its function is as follows. ATP-binding (A) component of a common energy-coupling factor (ECF) ABC-transporter complex. Unlike classic ABC transporters this ECF transporter provides the energy necessary to transport a number of different substrates. The polypeptide is Energy-coupling factor transporter ATP-binding protein EcfA2 (Staphylococcus aureus (strain USA300)).